A 245-amino-acid polypeptide reads, in one-letter code: tRNA pseudouridine synthase A (245 aa).

The active-site Nucleophile is Asp-52. Tyr-111 is a binding site for substrate.

Belongs to the tRNA pseudouridine synthase TruA family. Homodimer.

It carries out the reaction uridine(38/39/40) in tRNA = pseudouridine(38/39/40) in tRNA. Its function is as follows. Formation of pseudouridine at positions 38, 39 and 40 in the anticodon stem and loop of transfer RNAs. The protein is tRNA pseudouridine synthase A of Bradyrhizobium diazoefficiens (strain JCM 10833 / BCRC 13528 / IAM 13628 / NBRC 14792 / USDA 110).